A 274-amino-acid chain; its full sequence is MNPEHSPLGKATVYAAQYDASLLFPIPRAGAREQLGITSALPFFGTDIWNAYELSWLNARGKPQIAVATFYVPAESPNIVESKSFKLYLGSFAQTTFDSIDAVRDTLKRDVSAACGATVSVQLVSPHDFGKLEMEELDGLSLDRLDLDTDVYEPDPSLLKAAEDEAPVEETLVSDLLRSNCPVTGQPDWGSVQIHYVGPQIDHAGLLRYIISFRNHTGFHEQCVERIFLDILHACKPVKLAVYARYTRRGGLDINPFRTNYNQPMPDNARNARQ.

80-82 (VES) is a substrate binding site. Position 82–83 (82–83 (SK)) interacts with NADPH. Catalysis depends on C181, which acts as the Thioimide intermediate. The Proton donor role is filled by D188. Substrate is bound at residue 220-221 (HE). 249–250 (RG) serves as a coordination point for NADPH.

This sequence belongs to the GTP cyclohydrolase I family. QueF type 2 subfamily. In terms of assembly, homodimer.

It is found in the cytoplasm. The enzyme catalyses 7-aminomethyl-7-carbaguanine + 2 NADP(+) = 7-cyano-7-deazaguanine + 2 NADPH + 3 H(+). It participates in tRNA modification; tRNA-queuosine biosynthesis. Functionally, catalyzes the NADPH-dependent reduction of 7-cyano-7-deazaguanine (preQ0) to 7-aminomethyl-7-deazaguanine (preQ1). The sequence is that of NADPH-dependent 7-cyano-7-deazaguanine reductase from Burkholderia lata (strain ATCC 17760 / DSM 23089 / LMG 22485 / NCIMB 9086 / R18194 / 383).